Reading from the N-terminus, the 621-residue chain is NADPH-dependent diflavin oxidoreductase 1 (621 aa).

Positions 6–168 (IAVLYGSETG…VYFEFEKRII (163 aa)) constitute a Flavodoxin-like domain. FMN is bound by residues 12 to 17 (SETGNA), 59 to 62 (STTG), 106 to 115 (LGDSSYPKFN), and E142. The region spanning 224–489 (KLIKTGTITL…VGPGVGLAPL (266 aa)) is the FAD-binding FR-type domain. Residues R381, 411–414 (RLYS), and 443–446 (GVCT) each bind FAD. Residues 536 to 537 (SR) and 545 to 549 (TKYVQ) each bind NADP(+). Residue W621 coordinates FAD.

The protein belongs to the NADPH-dependent diflavin oxidoreductase NDOR1 family. It in the N-terminal section; belongs to the flavodoxin family. In the C-terminal section; belongs to the flavoprotein pyridine nucleotide cytochrome reductase family. Interacts with DRE2; as part of the cytosolic iron-sulfur (Fe-S) protein assembly (CIA) machinery. FAD serves as cofactor. Requires FMN as cofactor.

Its subcellular location is the cytoplasm. It is found in the mitochondrion. It catalyses the reaction 2 oxidized [2Fe-2S]-[protein] + NADPH = 2 reduced [2Fe-2S]-[protein] + NADP(+) + H(+). Its function is as follows. NADPH-dependent reductase which is a central component of the cytosolic iron-sulfur (Fe-S) protein assembly (CIA) machinery. Transfers electrons from NADPH via its FAD and FMN prosthetic groups to the [2Fe-2S] cluster of DRE2, another key component of the CIA machinery. In turn, this reduced cluster provides electrons for assembly of cytosolic iron-sulfur cluster proteins. Positively controls H(2)O(2)-induced cell death. The polypeptide is NADPH-dependent diflavin oxidoreductase 1 (Candida glabrata (strain ATCC 2001 / BCRC 20586 / JCM 3761 / NBRC 0622 / NRRL Y-65 / CBS 138) (Yeast)).